A 422-amino-acid chain; its full sequence is MILIKNGRVMDPKSQRDQVADVLIDGKQIVKIASAIECQEAQVIDASGLIVAPGLVDIHVHFREPGQTHKEDIHTGALAAAAGGVTTVVMMANTNPVISDVETLQEVLASAAKEKIHIYTNASVTQAFNGKDVTDFKALLEAGAVSFSDDGIPLESSKVLKEAFDLANANQTFISLHEEDPQLNGVLGFNEGIAEEHFHFCGATGVAEYSMIARDVMIAYDRQAHVHIQHLSKAESVQVVAFAQQLGAKVTAEVSPQHFSTTEDLLLIAGTSAKMNPPLRTQRDRLAVIEGLKSGVITVIATDHAPHHKDEKTVDDMTKAPSGMTGLETSLSLGLTHLVEPGHLTLMSLLEKMTLNPALLYGFDAGYLAENGPADLVIFADKQERLITENFASKASNSPFIGNKLKGVVKYTIADGEVVYPN.

2 residues coordinate Zn(2+): H59 and H61. Substrate-binding positions include 61–63 (HFR) and N93. 3 residues coordinate Zn(2+): D150, H177, and H230. N276 contacts substrate. Residue D303 participates in Zn(2+) binding. Residue D303 is part of the active site. Position 307 (H307) interacts with substrate.

The protein belongs to the metallo-dependent hydrolases superfamily. DHOase family. Class I DHOase subfamily. The cofactor is Zn(2+).

The catalysed reaction is (S)-dihydroorotate + H2O = N-carbamoyl-L-aspartate + H(+). It functions in the pathway pyrimidine metabolism; UMP biosynthesis via de novo pathway; (S)-dihydroorotate from bicarbonate: step 3/3. Its function is as follows. Catalyzes the reversible cyclization of carbamoyl aspartate to dihydroorotate. The chain is Dihydroorotase from Streptococcus pyogenes serotype M1.